A 169-amino-acid chain; its full sequence is MSVLQVLHIPDERLRKVAKPVEEVNAEIQRIVDDMFETMYAEEGIGLAATQVDIHQRIIVIDVSENRDERLVLINPELLEKSGETGIEEGCLSIPEQRALVPRAEKVKIRALDRNGNPFELEADGLLAICIQHEMDHLVGKLFIDYLSPLKQQRIRQKVEKLDRLNARA.

Positions 91 and 133 each coordinate Fe cation. Residue Glu134 is part of the active site. His137 lines the Fe cation pocket.

Belongs to the polypeptide deformylase family. Requires Fe(2+) as cofactor.

It catalyses the reaction N-terminal N-formyl-L-methionyl-[peptide] + H2O = N-terminal L-methionyl-[peptide] + formate. Functionally, removes the formyl group from the N-terminal Met of newly synthesized proteins. Requires at least a dipeptide for an efficient rate of reaction. N-terminal L-methionine is a prerequisite for activity but the enzyme has broad specificity at other positions. The chain is Peptide deformylase from Salmonella typhi.